Reading from the N-terminus, the 180-residue chain is Small ribosomal subunit protein uS5 (180 aa).

Residues 24–87 (MIEKLVAVNR…EQARKNLVSV (64 aa)) form the S5 DRBM domain.

The protein belongs to the universal ribosomal protein uS5 family. Part of the 30S ribosomal subunit. Contacts proteins S4 and S8.

In terms of biological role, with S4 and S12 plays an important role in translational accuracy. Located at the back of the 30S subunit body where it stabilizes the conformation of the head with respect to the body. The protein is Small ribosomal subunit protein uS5 of Stenotrophomonas maltophilia (strain R551-3).